We begin with the raw amino-acid sequence, 941 residues long: Bifunctional glutamine synthetase adenylyltransferase/adenylyl-removing enzyme (941 aa).

The tract at residues 1–431 (MSSAPPFAAA…TFRNAFRLAG (431 aa)) is adenylyl removase. The tract at residues 447–941 (NGHGMRPHAG…DGTIAQAEVK (495 aa)) is adenylyl transferase.

The protein belongs to the GlnE family. The cofactor is Mg(2+).

It carries out the reaction [glutamine synthetase]-O(4)-(5'-adenylyl)-L-tyrosine + phosphate = [glutamine synthetase]-L-tyrosine + ADP. The catalysed reaction is [glutamine synthetase]-L-tyrosine + ATP = [glutamine synthetase]-O(4)-(5'-adenylyl)-L-tyrosine + diphosphate. Its function is as follows. Involved in the regulation of glutamine synthetase GlnA, a key enzyme in the process to assimilate ammonia. When cellular nitrogen levels are high, the C-terminal adenylyl transferase (AT) inactivates GlnA by covalent transfer of an adenylyl group from ATP to specific tyrosine residue of GlnA, thus reducing its activity. Conversely, when nitrogen levels are low, the N-terminal adenylyl removase (AR) activates GlnA by removing the adenylyl group by phosphorolysis, increasing its activity. The regulatory region of GlnE binds the signal transduction protein PII (GlnB) which indicates the nitrogen status of the cell. The protein is Bifunctional glutamine synthetase adenylyltransferase/adenylyl-removing enzyme of Bordetella bronchiseptica (strain ATCC BAA-588 / NCTC 13252 / RB50) (Alcaligenes bronchisepticus).